We begin with the raw amino-acid sequence, 131 residues long: Small ribosomal subunit protein uS11 (131 aa).

This sequence belongs to the universal ribosomal protein uS11 family. Part of the 30S ribosomal subunit. Interacts with proteins S7 and S18. Binds to IF-3.

Its function is as follows. Located on the platform of the 30S subunit, it bridges several disparate RNA helices of the 16S rRNA. Forms part of the Shine-Dalgarno cleft in the 70S ribosome. The sequence is that of Small ribosomal subunit protein uS11 from Endomicrobium trichonymphae.